Consider the following 343-residue polypeptide: Holliday junction branch migration complex subunit RuvB (343 aa).

A disordered region spans residues 1–23 (MSDDFEVVRPEEQAGDEKDRDLR). The tract at residues 1-183 (MSDDFEVVRP…FGIVQRFEFY (183 aa)) is large ATPase domain (RuvB-L). ATP-binding positions include L22, R23, G64, K67, T68, T69, 130 to 132 (EDY), R173, Y183, and R220. T68 lines the Mg(2+) pocket. Residues 184 to 254 (SHEELASIIS…TVAAGLKQLN (71 aa)) form a small ATPAse domain (RuvB-S) region. Residues 257 to 343 (GLGLETYDRQ…LGDGQEGLFD (87 aa)) are head domain (RuvB-H). 2 residues coordinate DNA: R312 and R317.

It belongs to the RuvB family. Homohexamer. Forms an RuvA(8)-RuvB(12)-Holliday junction (HJ) complex. HJ DNA is sandwiched between 2 RuvA tetramers; dsDNA enters through RuvA and exits via RuvB. An RuvB hexamer assembles on each DNA strand where it exits the tetramer. Each RuvB hexamer is contacted by two RuvA subunits (via domain III) on 2 adjacent RuvB subunits; this complex drives branch migration. In the full resolvosome a probable DNA-RuvA(4)-RuvB(12)-RuvC(2) complex forms which resolves the HJ.

It localises to the cytoplasm. It carries out the reaction ATP + H2O = ADP + phosphate + H(+). In terms of biological role, the RuvA-RuvB-RuvC complex processes Holliday junction (HJ) DNA during genetic recombination and DNA repair, while the RuvA-RuvB complex plays an important role in the rescue of blocked DNA replication forks via replication fork reversal (RFR). RuvA specifically binds to HJ cruciform DNA, conferring on it an open structure. The RuvB hexamer acts as an ATP-dependent pump, pulling dsDNA into and through the RuvAB complex. RuvB forms 2 homohexamers on either side of HJ DNA bound by 1 or 2 RuvA tetramers; 4 subunits per hexamer contact DNA at a time. Coordinated motions by a converter formed by DNA-disengaged RuvB subunits stimulates ATP hydrolysis and nucleotide exchange. Immobilization of the converter enables RuvB to convert the ATP-contained energy into a lever motion, pulling 2 nucleotides of DNA out of the RuvA tetramer per ATP hydrolyzed, thus driving DNA branch migration. The RuvB motors rotate together with the DNA substrate, which together with the progressing nucleotide cycle form the mechanistic basis for DNA recombination by continuous HJ branch migration. Branch migration allows RuvC to scan DNA until it finds its consensus sequence, where it cleaves and resolves cruciform DNA. The polypeptide is Holliday junction branch migration complex subunit RuvB (Treponema denticola (strain ATCC 35405 / DSM 14222 / CIP 103919 / JCM 8153 / KCTC 15104)).